We begin with the raw amino-acid sequence, 207 residues long: ATP-dependent Clp protease proteolytic subunit (207 aa).

The Nucleophile role is filled by Ser111. Residue His136 is part of the active site.

Belongs to the peptidase S14 family. As to quaternary structure, fourteen ClpP subunits assemble into 2 heptameric rings which stack back to back to give a disk-like structure with a central cavity, resembling the structure of eukaryotic proteasomes.

The protein localises to the cytoplasm. It carries out the reaction Hydrolysis of proteins to small peptides in the presence of ATP and magnesium. alpha-casein is the usual test substrate. In the absence of ATP, only oligopeptides shorter than five residues are hydrolyzed (such as succinyl-Leu-Tyr-|-NHMec, and Leu-Tyr-Leu-|-Tyr-Trp, in which cleavage of the -Tyr-|-Leu- and -Tyr-|-Trp bonds also occurs).. Cleaves peptides in various proteins in a process that requires ATP hydrolysis. Has a chymotrypsin-like activity. Plays a major role in the degradation of misfolded proteins. This chain is ATP-dependent Clp protease proteolytic subunit, found in Psychromonas ingrahamii (strain DSM 17664 / CCUG 51855 / 37).